The chain runs to 600 residues: Integrator complex subunit 11 (600 aa).

Zn(2+) is bound by residues His68, His70, Asp72, His73, His157, and Asp178. An HXHXDH motif motif is present at residues His68–His73. Residue Glu203 is part of the active site. Lys381 participates in a covalent cross-link: Glycyl lysine isopeptide (Lys-Gly) (interchain with G-Cter in SUMO). Residue His414 participates in Zn(2+) binding. Residues Lys462 and Lys475 each participate in a glycyl lysine isopeptide (Lys-Gly) (interchain with G-Cter in SUMO) cross-link. The Nuclear localization signal motif lies at Leu469 to Leu479.

It belongs to the metallo-beta-lactamase superfamily. RNA-metabolizing metallo-beta-lactamase-like family. INTS11 subfamily. Component of the Integrator complex, composed of core subunits INTS1, INTS2, INTS3, INTS4, INTS5, INTS6, INTS7, INTS8, INTS9/RC74, INTS10, INTS11/CPSF3L, INTS12, INTS13, INTS14 and INTS15. The core complex associates with protein phosphatase 2A subunits PPP2CA and PPP2R1A, to form the Integrator-PP2A (INTAC) complex. INTS11 is part of the RNA endonuclease subcomplex, composed of INTS4, INTS9, INTS11 and inositol hexakisphosphate (InsP6). Interacts with WDR73; interaction is required for the assembly of the RNA endonuclease subcomplex in the cytoplasm. Interacts with BRAT1; interaction is required for the assembly of the RNA endonuclease subcomplex and inhibits the endonuclease activity of INTS11 before formation of mature integrator complex. It depends on Zn(2+) as a cofactor. In terms of processing, sumoylated; sumoylation regulates its subcellular location and is required for integrator complex integrity.

It localises to the nucleus. Its subcellular location is the cytoplasm. The RNA endonuclease activity is inhibited by BRAT1 that forms hyrogen bond and hydrophobic interactions with the active site. Its function is as follows. RNA endonuclease component of the integrator complex, a multiprotein complex that terminates RNA polymerase II (Pol II) transcription in the promoter-proximal region of genes. The integrator complex provides a quality checkpoint during transcription elongation by driving premature transcription termination of transcripts that are unfavorably configured for transcriptional elongation: the complex terminates transcription by (1) catalyzing dephosphorylation of the C-terminal domain (CTD) of Pol II subunit POLR2A/RPB1 and SUPT5H/SPT5, (2) degrading the exiting nascent RNA transcript via endonuclease activity and (3) promoting the release of Pol II from bound DNA. The integrator complex is also involved in terminating the synthesis of non-coding Pol II transcripts, such as enhancer RNAs (eRNAs), small nuclear RNAs (snRNAs), telomerase RNAs and long non-coding RNAs (lncRNAs). Within the integrator complex, INTS11 constitutes the RNA endonuclease subunit that degrades exiting nascent RNA transcripts. Mediates recruitment of cytoplasmic dynein to the nuclear envelope, probably as component of the integrator complex. In Rattus norvegicus (Rat), this protein is Integrator complex subunit 11 (Ints11).